The following is a 94-amino-acid chain: C-X-C motif chemokine 11-1 (94 aa).

Residues 1–19 (MKTVTALLLVSLAVVAIEG) form the signal peptide. 2 disulfide bridges follow: Cys-27/Cys-54 and Cys-29/Cys-71.

Belongs to the intercrine alpha (chemokine CxC) family.

The protein resides in the secreted. Its function is as follows. Ligand for cxcr3.2. Chemotactic for macrophages. This Danio rerio (Zebrafish) protein is C-X-C motif chemokine 11-1 (cxcl11.1).